Here is a 3189-residue protein sequence, read N- to C-terminus: Beauvericin nonribosomal cyclodepsipeptide synthetase (3189 aa).

The segment at 73-466 (HAMYEISQHV…EQLQSAADDA (394 aa)) is condensation 1. The segment at 202-223 (DSLPLTPDSSGGSDSDSPSTLK) is disordered. Over residues 208–220 (PDSSGGSDSDSPS) the composition is skewed to low complexity. Residues 507 to 901 (AESPSDPAVL…GRIDSQVKIR (395 aa)) are adenylation 1. Residues 1036-1112 (TLETGPEARL…RLQAVMSGDS (77 aa)) enclose the Carrier 1 domain. The residue at position 1073 (serine 1073) is an O-(pantetheine 4'-phosphoryl)serine. Positions 1136–1569 (SYSQGRLWFL…KSLISVLPLT (434 aa)) are condensation 2. Residues 1599 to 2004 (FRSQVATCPD…GRMDFQFKIR (406 aa)) form an adenylation 2 region. The segment at 2072-2211 (MYNGIDAISP…FPTVEYLTRV (140 aa)) is S-adenosyl-L-methionine-dependent N-methyltransferase. 2 consecutive Carrier domains span residues 2557–2631 (CPIS…REGL) and 2654–2728 (APRN…ELGQ). 2 positions are modified to O-(pantetheine 4'-phosphoryl)serine: serine 2591 and serine 2688. The tract at residues 2773–3181 (QDVYPATHMQ…AYLMEEVCRL (409 aa)) is condensation 3.

The protein belongs to the NRP synthetase family.

It carries out the reaction 3 (R)-2-hydroxy-3-methylbutanoate + 3 L-phenylalanine + 3 S-adenosyl-L-methionine + 6 ATP = beauvericin + 6 AMP + 3 S-adenosyl-L-homocysteine + 6 diphosphate + 6 H(+). Functionally, beauvericin nonribosomal cyclodepsipeptide synthetase; part of the gene cluster that mediates the biosynthesis of beauvericin (BEA), a non-ribosomal cyclic hexadepsipeptide that shows antibiotic, antifungal, insecticidal, and cancer cell antiproliferative and antihaptotactic activity. Ketoisovalerate reductase BEA2 catalyzes the NADPH-specific reduction of ketoisovaleric acid to hydroxyisovalerate, a precursor for beauvericin biosynthesis. The nonribosomal cyclodepsipeptide synthetase BEA1 then catalyzes the formation of beauvericin via condensation and cyclization of 3 dipeptidol monomers, each composed of one unit of hydroxyisovalerate and one unit of N-methyl-phenylalanine. This is Beauvericin nonribosomal cyclodepsipeptide synthetase (Beas) from Beauveria bassiana (White muscardine disease fungus).